Consider the following 688-residue polypeptide: PTS system glucoside-specific EIICBA component (688 aa).

In terms of domain architecture, PTS EIIC type-1 spans 3 to 427; that stretch reads KKLFGQLQRI…FKLKTPGRED (425 aa). Transmembrane regions (helical) follow at residues 12-32, 81-101, 137-157, 182-202, 223-243, 284-304, 315-335, 340-360, 364-384, and 395-415; these read IGKA…LLAF, LGLA…YLIM, LVLG…MGAL, FVPI…SFAW, LTTF…LHHI, AFTT…AFAI, VVGG…ITEP, FLFV…TSFL, LLGV…ILYG, and LVIP…DFAI. In terms of domain architecture, PTS EIIB type-1 spans 438-519; the sequence is AKLPFDVLDA…AKIMSGEITK (82 aa). Catalysis depends on C460, which acts as the Phosphocysteine intermediate; for EIIB activity. One can recognise a PTS EIIA type-1 domain in the interval 560-664; that stretch reads DQVFAGKMMG…SIVTPMIITN (105 aa). The active-site Tele-phosphohistidine intermediate; for EIIA activity is the H612.

It is found in the cell membrane. Its function is as follows. The phosphoenolpyruvate-dependent sugar phosphotransferase system (sugar PTS), a major carbohydrate active -transport system, catalyzes the phosphorylation of incoming sugar substrates concomitantly with their translocation across the cell membrane. This system is involved in alpha- and beta-glucoside transport. This Staphylococcus aureus (strain JH1) protein is PTS system glucoside-specific EIICBA component (glcB).